The chain runs to 193 residues: Orotate phosphoribosyltransferase (193 aa).

A 5-phospho-alpha-D-ribose 1-diphosphate-binding site is contributed by 114 to 122 (EDVITTGGS). Positions 118 and 146 each coordinate orotate.

Belongs to the purine/pyrimidine phosphoribosyltransferase family. PyrE subfamily. Homodimer. The cofactor is Mg(2+).

It carries out the reaction orotidine 5'-phosphate + diphosphate = orotate + 5-phospho-alpha-D-ribose 1-diphosphate. It functions in the pathway pyrimidine metabolism; UMP biosynthesis via de novo pathway; UMP from orotate: step 1/2. Functionally, catalyzes the transfer of a ribosyl phosphate group from 5-phosphoribose 1-diphosphate to orotate, leading to the formation of orotidine monophosphate (OMP). The chain is Orotate phosphoribosyltransferase from Chlorobium phaeobacteroides (strain BS1).